The following is a 731-amino-acid chain: Cell death abnormality protein 12 (731 aa).

Residues 339 to 485 (AEVQKILDIE…VVLEQLRHVL (147 aa)) enclose the ELMO domain. Residues 544 to 679 (VRINHLNYLK…WLEGLAELIG (136 aa)) enclose the PH domain. Residues 715-718 (PEIP) carry the SH3-binding motif.

As to quaternary structure, interacts with psr-1. Forms a ternary complex with ced-2 and ced-5.

The protein resides in the cytoplasm. Its function is as follows. Involved in programmed apoptosis and necrosis. Required for the cell corpse engulfment process. Has roles in the formation of actin halos and distal tip cell migration. Negatively regulates the unc-6/Netrin receptor unc-5 to control distal tip cell migration along the anterior-posterior axis of the body. Plays no role in amphid axon outgrowth. This is Cell death abnormality protein 12 from Caenorhabditis elegans.